A 285-amino-acid chain; its full sequence is Energy-coupling factor transporter ATP-binding protein EcfA2 (285 aa).

The ABC transporter domain occupies 3–245 (INFEQVNFSY…DLVWFKTVAL (243 aa)). 40–47 (GQTGSGKS) contacts ATP. Glu-171 functions as the Proton acceptor in the catalytic mechanism.

This sequence belongs to the ABC transporter superfamily. Energy-coupling factor EcfA family. Forms a stable energy-coupling factor (ECF) transporter complex probably composed of 2 membrane-embedded substrate-binding proteins (S component), 2 ATP-binding proteins (A component) and 2 transmembrane proteins (T component). This complex interacts with a number of substrate-specific components, including FolT, PanT and RibU for 5-formyltetrahydrofolate, pantothenate and riboflavin respectively.

The protein localises to the cell membrane. Functionally, ATP-binding (A) component of a common energy-coupling factor (ECF) ABC-transporter complex. Unlike classic ABC transporters this ECF transporter provides the energy necessary to transport a number of different substrates including 5-formyltetrahydrofolate, pantothenate and riboflavin. Expression of the complex plus FolT in E.coli allows 5-formyltetrahydrofolate uptake; 5-formyltetrahydrofolate is not taken up in the absence of FolT or the EcfA1A2T complex. This Leuconostoc mesenteroides subsp. mesenteroides (strain ATCC 8293 / DSM 20343 / BCRC 11652 / CCM 1803 / JCM 6124 / NCDO 523 / NBRC 100496 / NCIMB 8023 / NCTC 12954 / NRRL B-1118 / 37Y) protein is Energy-coupling factor transporter ATP-binding protein EcfA2.